The following is a 242-amino-acid chain: Lactate utilization protein A 1 (242 aa).

It belongs to the LutA/YkgE family.

Its function is as follows. Is involved in L-lactate degradation and allows cells to grow with lactate as the sole carbon source. The protein is Lactate utilization protein A 1 of Bacillus anthracis (strain CDC 684 / NRRL 3495).